Here is a 336-residue protein sequence, read N- to C-terminus: UPF0065 protein in tcbD-tcbE intergenic region (336 aa).

Positions 1-32 (MHSSKCPDLANIGRRRVLAGIALAMTTSSTRA) are cleaved as a signal peptide.

The protein belongs to the UPF0065 (bug) family.

It localises to the periplasm. The protein is UPF0065 protein in tcbD-tcbE intergenic region of Pseudomonas sp. (strain P51).